A 122-amino-acid polypeptide reads, in one-letter code: Large ribosomal subunit protein uL14 (122 aa).

The protein belongs to the universal ribosomal protein uL14 family. As to quaternary structure, part of the 50S ribosomal subunit. Forms a cluster with proteins L3 and L19. In the 70S ribosome, L14 and L19 interact and together make contacts with the 16S rRNA in bridges B5 and B8.

In terms of biological role, binds to 23S rRNA. Forms part of two intersubunit bridges in the 70S ribosome. This chain is Large ribosomal subunit protein uL14, found in Psychrobacter arcticus (strain DSM 17307 / VKM B-2377 / 273-4).